The chain runs to 702 residues: Phosphoglycerol transferase I (702 aa).

Transmembrane regions (helical) follow at residues 5–24 (LLVS…RLAW), 73–95 (GYIA…VRIR), and 102–124 (GGGA…SPLY).

It belongs to the OpgB family.

The protein resides in the cell inner membrane. The enzyme catalyses a phosphatidylglycerol + a membrane-derived-oligosaccharide D-glucose = a 1,2-diacyl-sn-glycerol + a membrane-derived-oligosaccharide 6-(glycerophospho)-D-glucose.. The protein operates within glycan metabolism; osmoregulated periplasmic glucan (OPG) biosynthesis. Functionally, transfers a phosphoglycerol residue from phosphatidylglycerol to the membrane-bound nascent glucan backbones. This Xanthomonas axonopodis pv. citri (strain 306) protein is Phosphoglycerol transferase I.